A 295-amino-acid chain; its full sequence is Protein LplC (295 aa).

6 helical membrane-spanning segments follow: residues I21–G41, V81–A101, L116–V136, L142–I162, V199–L219, and G260–L280. Residues M79–L280 enclose the ABC transmembrane type-1 domain.

Belongs to the binding-protein-dependent transport system permease family. CysTW subfamily.

The protein resides in the cell membrane. In Bacillus subtilis (strain 168), this protein is Protein LplC (lplC).